Here is a 55-residue protein sequence, read N- to C-terminus: Large ribosomal subunit protein bL33 (55 aa).

This sequence belongs to the bacterial ribosomal protein bL33 family.

The protein is Large ribosomal subunit protein bL33 of Chelativorans sp. (strain BNC1).